The sequence spans 101 residues: Small ribosomal subunit protein uS10 (101 aa).

It belongs to the universal ribosomal protein uS10 family. Part of the 30S ribosomal subunit.

Involved in the binding of tRNA to the ribosomes. In Corynebacterium aurimucosum (strain ATCC 700975 / DSM 44827 / CIP 107346 / CN-1) (Corynebacterium nigricans), this protein is Small ribosomal subunit protein uS10.